A 535-amino-acid chain; its full sequence is Beta-amylase (535 aa).

Positions 1 to 2 are cleaved as a propeptide — removed in mature form; that stretch reads ME. Position 3 is an N-acetylvaline (Val3). Substrate-binding residues include Asp51, His91, and Asp99. The Proton donor role is filled by Glu184. Positions 293, 298, and 340 each coordinate substrate. Glu378 serves as the catalytic Proton acceptor. Substrate contacts are provided by residues 379-380 and Arg418; that span reads NA. 3 tandem repeats follow at residues 489–499, 500–510, and 511–521. The 4 X 11 AA tandem repeats stretch occupies residues 489-532; it reads GPTGGMGGQAEGPTCGMGGQVKGPTGGMGGQAEDPTSGMGGELP. The propeptide at 490 to 535 is removed in mature form; that stretch reads PTGGMGGQAEGPTCGMGGQVKGPTGGMGGQAEDPTSGMGGELPATM. Positions 513 to 535 are disordered; that stretch reads TGGMGGQAEDPTSGMGGELPATM. A 4; approximate repeat occupies 522–532; sequence DPTSGMGGELP.

The protein belongs to the glycosyl hydrolase 14 family. Monomer. As to expression, endosperm.

It catalyses the reaction Hydrolysis of (1-&gt;4)-alpha-D-glucosidic linkages in polysaccharides so as to remove successive maltose units from the non-reducing ends of the chains.. Functionally, catalyzes the liberation of maltose from 1,4-alpha-D glucans. The sequence is that of Beta-amylase from Hordeum vulgare subsp. spontaneum (Wild barley).